Consider the following 501-residue polypeptide: MAPALRWLLLWVGSGMLPAQGTHLGIRLPLRSGLAGPPLGLRLPRETDEEPEEPGRRGSFVEMVDNLRGKSGQGYYVEMTVGSPPQTLNILVDTGSSNFAVGAAPHPFLHRYYQRQLSSTYRDLRKSVYVPYTQGKWEGELGTDLVSIPHGPNVTVRANIAAITESDKFFINGSNWEGILGLAYAEIARPDDSLEPFFDSLVKQTHIPNIFSLQLCGAGFPLNQTEALASVGGSMIIGGIDHSLYTGSLWYTPIRREWYYEVIIVRVEINGQDLKMDCKEYNYDKSIVDSGTTNLRLPKKVFEAAVKSIKAASSTEKFPDGFWLGEQLVCWQAGTTPWNIFPVISLYLMGEVTNQSFRITILPQQYLRPVEDVATSQDDCYKFAVSQSSTGTVMGAVIMEGFYVVFDRARKRIGFAVSACHVHDEFRTAAVEGPFVTADMEDCGYNIPQTDESTLMTIAYVMAAICALFMLPLCLMVCQWRCLRCLRHQHDDFADDISLLK.

The N-terminal stretch at 1-21 (MAPALRWLLLWVGSGMLPAQG) is a signal peptide. Positions 22-45 (THLGIRLPLRSGLAGPPLGLRLPR) are excised as a propeptide. At 22–457 (THLGIRLPLR…PQTDESTLMT (436 aa)) the chain is on the extracellular side. In terms of domain architecture, Peptidase A1 spans 75-416 (YYVEMTVGSP…DRARKRIGFA (342 aa)). Residue Asp93 is part of the active site. Lys126 is modified (N6-acetyllysine). Asn153, Asn172, and Asn223 each carry an N-linked (GlcNAc...) asparagine glycan. Cystine bridges form between Cys216–Cys420, Cys278–Cys443, and Cys330–Cys380. N6-acetyllysine is present on residues Lys275, Lys279, and Lys285. The active site involves Asp289. Residues Lys299, Lys300, and Lys307 each carry the N6-acetyllysine modification. Residue Asn354 is glycosylated (N-linked (GlcNAc...) asparagine). A helical membrane pass occupies residues 458–478 (IAYVMAAICALFMLPLCLMVC). S-palmitoyl cysteine attachment occurs at residues Cys474, Cys478, Cys482, and Cys485. The Cytoplasmic portion of the chain corresponds to 479 to 501 (QWRCLRCLRHQHDDFADDISLLK). The interaction with RTN3 stretch occupies residues 479–501 (QWRCLRCLRHQHDDFADDISLLK). Residues 496-500 (DISLL) carry the DXXLL motif. Ser498 bears the Phosphoserine mark. A Glycyl lysine isopeptide (Lys-Gly) (interchain with G-Cter in ubiquitin) cross-link involves residue Lys501.

The protein belongs to the peptidase A1 family. Monomer. Interacts (via DXXLL motif) with GGA1, GGA2 and GGA3 (via their VHS domain); the interaction highly increases when BACE1 is phosphorylated at Ser-498. Interacts with RTN1; RTN2; RTN3 and RTN4; the interaction leads to inhibition of amyloid precursor protein processing. Interacts with SNX6. Interacts with PCSK9. Interacts with NAT8 and NAT8B. Interacts with BIN1. Interacts (via extracellular domain) with ADAM10 (via extracellular domain). Interacts with SORL1; this interaction may affect binding with APP and hence reduce APP cleavage. Interacts with NRDC AND NRG1. Post-translationally, palmitoylation mediates lipid raft localization. Acetylated in the endoplasmic reticulum at Lys-126, Lys-275, Lys-279, Lys-285, Lys-299, Lys-300 and Lys-307. Acetylation by NAT8 and NAT8B is transient and deacetylation probably occurs in the Golgi. Acetylation regulates the maturation, the transport to the plasma membrane, the stability and the expression of the protein. In terms of processing, ubiquitinated at Lys-501, ubiquitination leads to lysosomal degradation. Monoubiquitinated and 'Lys-63'-linked polyubitinated. Deubiquitnated by USP8; inhibits lysosomal degradation. Post-translationally, phosphorylation at Ser-498 is required for interaction with GGA1 and retrograded transport from endosomal compartments to the trans-Golgi network. Non-phosphorylated BACE1 enters a direct recycling route to the cell surface. N-Glycosylated. Addition of a bisecting N-acetylglucosamine by MGAT3 blocks lysosomal targeting, further degradation and is required for maintaining stability under stress conditions.

The protein resides in the cell membrane. The protein localises to the golgi apparatus. Its subcellular location is the trans-Golgi network. It is found in the endoplasmic reticulum. It localises to the endosome. The protein resides in the cell surface. The protein localises to the cytoplasmic vesicle membrane. Its subcellular location is the membrane raft. It is found in the lysosome. It localises to the late endosome. The protein resides in the early endosome. The protein localises to the recycling endosome. Its subcellular location is the cell projection. It is found in the axon. It localises to the dendrite. The enzyme catalyses Broad endopeptidase specificity. Cleaves Glu-Val-Asn-Leu-|-Asp-Ala-Glu-Phe in the Swedish variant of Alzheimer's amyloid precursor protein.. With respect to regulation, inhibited by RTN3 and RTN4. Responsible for the proteolytic processing of the amyloid precursor protein (APP). Cleaves at the N-terminus of the A-beta peptide sequence, between residues 671 and 672 of APP, leads to the generation and extracellular release of beta-cleaved soluble APP, and a corresponding cell-associated C-terminal fragment which is later released by gamma-secretase. Cleaves CHL1. This is Beta-secretase 1 (Bace1) from Rattus norvegicus (Rat).